A 205-amino-acid chain; its full sequence is Photosystem I assembly protein Ycf4 (205 aa).

2 helical membrane-spanning segments follow: residues 23-43 (WATV…SSYI) and 86-106 (LMCF…CLIF).

It belongs to the Ycf4 family.

Its subcellular location is the plastid. It localises to the chloroplast thylakoid membrane. In terms of biological role, seems to be required for the assembly of the photosystem I complex. This chain is Photosystem I assembly protein Ycf4, found in Tetradesmus obliquus (Green alga).